Here is a 438-residue protein sequence, read N- to C-terminus: Putative F-box/FBD/LRR-repeat protein At2g05300 (438 aa).

The F-box domain occupies 13-59; it reads EDRISQLPDPLLTQILNLLPTEEAVKTSVLSTRWRTLWLWVPNLELS. 4 LRR repeats span residues 135–166, 167–192, 235–261, and 318–346; these read CDSL…RLKD, IVFH…KIDV, CLII…DISL, and YVTL…ILER. In terms of domain architecture, FBD spans 362–409; sequence SMSSVPECLLTSLEFVEFKAPICGLGPEMMLVWYFLKNSPTLKKLTLP.

The sequence is that of Putative F-box/FBD/LRR-repeat protein At2g05300 from Arabidopsis thaliana (Mouse-ear cress).